An 809-amino-acid chain; its full sequence is Leucine-rich repeat and calponin homology domain-containing protein (809 aa).

The segment at 27-53 (GSASLPGSGTGSGSGIGHAGNTSSSTS) is disordered. Over residues 34–44 (SGTGSGSGIGH) the composition is skewed to gly residues. LRR repeat units lie at residues 72–96 (EAHF…GTKY), 98–121 (LTDT…VTTF), 122–144 (AFLE…VKQL), 145–168 (SSLT…CFLP), 170–189 (QVLL…LGRL), 191–213 (QTLT…LGEL), 214–236 (RSLR…LTCL), 238–258 (LISL…IRHM), and 260–282 (TLVE…CMRG). Disordered regions lie at residues 295 to 373 (TKDE…LHCV), 423 to 442 (LSYA…QDDD), and 490 to 550 (KHPN…VDDV). Positions 319 to 336 (HNSSGNVLEASTTGSTNN) are enriched in polar residues. Positions 351-368 (GLDKRWSHDAPTKSKTDS) are enriched in basic and acidic residues. A compositionally biased stretch (polar residues) spans 518–532 (NTLPKSIMKQNSNQI). Positions 662-776 (QREETELMSQ…TVGELFRLHG (115 aa)) constitute a Calponin-homology (CH) domain. The segment at 783–809 (GNSSGAATPTKSPTRTTRATMSPTPLA) is disordered. Residues 788–809 (AATPTKSPTRTTRATMSPTPLA) are compositionally biased toward polar residues.

The protein localises to the cytoplasm. Its subcellular location is the cytoskeleton. It localises to the cell cortex. The protein resides in the cleavage furrow. Its function is as follows. May play a role in the stabilization of the actin-rich cell cortex during cell division. This chain is Leucine-rich repeat and calponin homology domain-containing protein, found in Drosophila melanogaster (Fruit fly).